The primary structure comprises 359 residues: Type-1 angiotensin II receptor (359 aa).

The Extracellular portion of the chain corresponds to 1 to 25 (MVPNYSTEETVKRIHVDCPVSGRHS). A glycan (N-linked (GlcNAc...) asparagine) is linked at Asn4. Asp17 provides a ligand contact to angiotensin II. Intrachain disulfides connect Cys18–Cys274 and Cys101–Cys180. A helical membrane pass occupies residues 26–55 (YIYIMVPTVYSIIFIIGIFGNSLVVIVIYC). The Cytoplasmic segment spans residues 56 to 61 (YMKLKT). The helical transmembrane segment at 62 to 89 (VASIFLLNLALADLCFLITLPLWAAYTA) threads the bilayer. At 90–98 (MEYQWPFGN) the chain is on the extracellular side. Residues 99 to 125 (CLCKLASAGISFNLYASVFLLTCLSID) form a helical membrane-spanning segment. Residues 126 to 141 (RYLAIVHPVKSRIRRT) are Cytoplasmic-facing. The helical transmembrane segment at 142–165 (MFVARVTCIVIWLLAGVASLPVII) threads the bilayer. Over 166-190 (HRNIFFAENLNMTVCGFRYDNNNTT) the chain is Extracellular. Arg167 lines the angiotensin II pocket. An N-linked (GlcNAc...) asparagine glycan is attached at Asn176. Residues Phe182 and Tyr184 each coordinate angiotensin II. 2 N-linked (GlcNAc...) asparagine glycosylation sites follow: Asn187 and Asn188. A helical transmembrane segment spans residues 191–216 (LRVGLGLSKNLLGFLIPFLIILTSYT). An angiotensin II-binding site is contributed by Lys199. At 217-239 (LIWKTLKKAYQIQRNKTRNDDIF) the chain is on the cytoplasmic side. A helical transmembrane segment spans residues 240–268 (KMIVAIVFFFFFSWIPHQVFTFLDVLIQL). Residues 269 to 278 (HVITDCKITD) lie on the Extracellular side of the membrane. The helical transmembrane segment at 279-304 (IVDTAMPFTICIAYFNNCLNPFFYVF) threads the bilayer. Residues 305–359 (FGKNFKKYFLQLIKYIPPNVSTHPSLTTKMSSLSYRPPENIRLPTKKTAGSFDAE) are Cytoplasmic-facing.

Belongs to the G-protein coupled receptor 1 family. C-terminal Ser or Thr residues may be phosphorylated.

It localises to the cell membrane. Its function is as follows. Receptor for angiotensin II, a vasoconstricting peptide, which acts as a key regulator of blood pressure and sodium retention by the kidney. The activated receptor in turn couples to G-alpha proteins G(q) (GNAQ, GNA11, GNA14 or GNA15) and thus activates phospholipase C and increases the cytosolic Ca(2+) concentrations, which in turn triggers cellular responses such as stimulation of protein kinase C. This chain is Type-1 angiotensin II receptor (AGTR1), found in Gallus gallus (Chicken).